The primary structure comprises 419 residues: Endothiapepsin (419 aa).

Residues 1–20 form the signal peptide; that stretch reads MSSPLKNALVTAMLAGGALS. Positions 21 to 89 are cleaved as a propeptide — activation peptide; it reads SPTKQHVGIP…QNSTSGLAER (69 aa). A Peptidase A1 domain is found at 106-417; that stretch reads YITPVQIGTP…GATTPTLGFA (312 aa). Residues Asp-124 and Ser-288 contribute to the active site. The cysteines at positions 344 and 379 are disulfide-linked.

It belongs to the peptidase A1 family.

The catalysed reaction is Hydrolysis of proteins with specificity similar to that of pepsin A, prefers hydrophobic residues at P1 and P1', but does not cleave 14-Ala-|-Leu-15 in the B chain of insulin or Z-Glu-Tyr. Clots milk.. This is Endothiapepsin (EAPA) from Cryphonectria parasitica (Chestnut blight fungus).